A 54-amino-acid polypeptide reads, in one-letter code: Large ribosomal subunit protein bL33 (54 aa).

The protein belongs to the bacterial ribosomal protein bL33 family.

This is Large ribosomal subunit protein bL33 from Corynebacterium diphtheriae (strain ATCC 700971 / NCTC 13129 / Biotype gravis).